We begin with the raw amino-acid sequence, 308 residues long: tRNA pseudouridine synthase B (308 aa).

Aspartate 51 (nucleophile) is an active-site residue.

Belongs to the pseudouridine synthase TruB family. Type 1 subfamily.

The enzyme catalyses uridine(55) in tRNA = pseudouridine(55) in tRNA. Functionally, responsible for synthesis of pseudouridine from uracil-55 in the psi GC loop of transfer RNAs. In Aromatoleum aromaticum (strain DSM 19018 / LMG 30748 / EbN1) (Azoarcus sp. (strain EbN1)), this protein is tRNA pseudouridine synthase B.